Here is a 509-residue protein sequence, read N- to C-terminus: Maturase K (509 aa).

Belongs to the intron maturase 2 family. MatK subfamily.

Its subcellular location is the plastid. It is found in the chloroplast. Its function is as follows. Usually encoded in the trnK tRNA gene intron. Probably assists in splicing its own and other chloroplast group II introns. This Nicotiana alata (Winged tobacco) protein is Maturase K.